Consider the following 749-residue polypeptide: Taperin (749 aa).

Residues 144-348 are disordered; sequence PAAPCRRGSP…IRPSSKPDME (205 aa). Composition is skewed to polar residues over residues 169–179, 230–239, and 250–266; these read SAATRTPTNRS, LQKTGSNSFT, and VNRS…SPTG. The residue at position 274 (Ser274) is a Phosphoserine. Residues 323–335 show a composition bias toward polar residues; it reads QRQWVSSATSAND. Basic and acidic residues predominate over residues 337 to 347; it reads FEIRPSSKPDM. A phosphoserine mark is found at Ser401, Ser457, and Ser501. Disordered stretches follow at residues 502 to 586, 636 to 673, and 730 to 749; these read EEEA…TTLE, FEYP…SEKP, and LTPA…ALYF. Composition is skewed to polar residues over residues 534–544 and 558–570; these read ELLNRGSNTFT and HLSQ…QQGA. A compositionally biased stretch (acidic residues) spans 647–668; that stretch reads EEAEEEEEEEGEEDGEEEEVGP.

Belongs to the taperin family. In terms of assembly, interacts with GRXCR2; the interaction restricts TPRN to the stereocilum basal region. Interacts with actin ACTB; the interaction may stabilize stereocilia. Interacts with CLIC5. Interacts with PTPRQ. TPRN, CLIC5 and PTPQR form concentric rings at the base of stereocilia and may form a complex. Interacts with phosphatase PPP1CA; the interaction results in inhibition of PPP1CA phosphatase activity. Interacts with DNA damage response proteins XRCC6/KU70, XRCC5/KU80, PARP1, TOP1 and TOP2A; these interactions recruit TPRN to sites of DNA damage where it may play a role in DNA repair. In terms of tissue distribution, in the organ of Corti, expressed in the inner ear hair cell stereocilia and the supporting cells (at protein level). Expressed in the sensory epithelia of the organ of Corti and vestibular end organs and, to a lesser extent, in Reisner's membrane and the spiral ligament (at protein level). At postnatal day 2, expression is detected in cochlea, liver, brain, kidney, heart and lung.

It localises to the cell projection. Its subcellular location is the stereocilium. It is found in the microvillus. The protein resides in the nucleus. The protein localises to the nucleoplasm. It localises to the cytoplasm. In terms of biological role, essential for hearing. Required for maintenance of stereocilia on both inner and outer hair cells. Necessary for the integrity of the stereociliary rootlet. May act as an actin cytoskeleton regulator involved in the regulation of actin dynamics at the pointed end in hair cells. Forms rings at the base of stereocilia and binds actin filaments in the stereocilia which may stabilize the stereocilia. Acts as a strong inhibitor of PPP1CA phosphatase activity. Recruited to sites of DNA damage and may play a role in DNA damage repair. The sequence is that of Taperin (Tprn) from Mus musculus (Mouse).